Reading from the N-terminus, the 356-residue chain is tRNA N6-adenosine threonylcarbamoyltransferase (356 aa).

The Fe cation site is built by histidine 115 and histidine 119. Residues 138–142 (LVSGG), aspartate 171, glycine 184, and asparagine 283 each bind substrate. Residue aspartate 311 participates in Fe cation binding.

Belongs to the KAE1 / TsaD family. It depends on Fe(2+) as a cofactor.

It localises to the cytoplasm. The catalysed reaction is L-threonylcarbamoyladenylate + adenosine(37) in tRNA = N(6)-L-threonylcarbamoyladenosine(37) in tRNA + AMP + H(+). Required for the formation of a threonylcarbamoyl group on adenosine at position 37 (t(6)A37) in tRNAs that read codons beginning with adenine. Is involved in the transfer of the threonylcarbamoyl moiety of threonylcarbamoyl-AMP (TC-AMP) to the N6 group of A37, together with TsaE and TsaB. TsaD likely plays a direct catalytic role in this reaction. This is tRNA N6-adenosine threonylcarbamoyltransferase from Prochlorococcus marinus (strain NATL2A).